A 324-amino-acid chain; its full sequence is HLLNVKIGMTFSGGVIDFLLFGVLPNRTAWWLVIPVGLVFAVIYYFGFRFAIRKWDLATPGREKTVEEAPKAEAAAAGDLPYEVLAALGGKENIEHLDACITRLRVSVHDIGRVDKDRLKALGAAGVLEVGNNVQAIFGPKSDMLKGQIQDIMQGKAPARAEEKPKTAASEAAESETIASPMSGEIVPLAEVPDQVFSQKMMGDGFAVMPTDGTVVSPVDGKIINVFPTKHAIGIQSAGGHEILIHVGIDTVKLNGQGFEALVKEGDEVKKGQPILRVDLDYVKQNAPSIVTPVIFTNLQAGETVHVNKQGPVARGEDAVVTIR.

The PTS EIIC type-1 domain occupies 1-63; sequence HLLNVKIGMT…KWDLATPGRE (63 aa). A run of 2 helical transmembrane segments spans residues 5-25 and 28-48; these read VKIGMTFSGGVIDFLLFGVLP and TAWWLVIPVGLVFAVIYYFGF. The region spanning 78–159 is the PTS EIIB type-1 domain; it reads GDLPYEVLAA…QDIMQGKAPA (82 aa). Residue C100 is the Phosphocysteine intermediate; for EIIB activity of the active site. Residues 156–177 are disordered; the sequence is KAPARAEEKPKTAASEAAESET. Over residues 167 to 177 the composition is skewed to low complexity; the sequence is TAASEAAESET. The PTS EIIA type-1 domain maps to 194–298; sequence DQVFSQKMMG…SIVTPVIFTN (105 aa). H246 functions as the Tele-phosphohistidine intermediate; for EIIA activity in the catalytic mechanism.

The protein localises to the cell membrane. It catalyses the reaction N(pros)-phospho-L-histidyl-[protein] + D-glucose(out) = D-glucose 6-phosphate(in) + L-histidyl-[protein]. Functionally, the phosphoenolpyruvate-dependent sugar phosphotransferase system (sugar PTS), a major carbohydrate active transport system, catalyzes the phosphorylation of incoming sugar substrates concomitantly with their translocation across the cell membrane. This system is involved in glucose transport. The polypeptide is PTS system glucose-specific EIICBA component (ptsG) (Geobacillus stearothermophilus (Bacillus stearothermophilus)).